Reading from the N-terminus, the 878-residue chain is Alanine--tRNA ligase (878 aa).

4 residues coordinate Zn(2+): His-567, His-571, Cys-669, and His-673.

This sequence belongs to the class-II aminoacyl-tRNA synthetase family. Zn(2+) is required as a cofactor.

It localises to the cytoplasm. It catalyses the reaction tRNA(Ala) + L-alanine + ATP = L-alanyl-tRNA(Ala) + AMP + diphosphate. Catalyzes the attachment of alanine to tRNA(Ala) in a two-step reaction: alanine is first activated by ATP to form Ala-AMP and then transferred to the acceptor end of tRNA(Ala). Also edits incorrectly charged Ser-tRNA(Ala) and Gly-tRNA(Ala) via its editing domain. The protein is Alanine--tRNA ligase of Rickettsia canadensis (strain McKiel).